The following is a 464-amino-acid chain: Glycine--tRNA ligase (464 aa).

Arginine 104 and glutamate 175 together coordinate substrate. ATP contacts are provided by residues 207-209 (RNE), 217-222 (FRTREF), 292-293 (EL), and 336-339 (GVNR). A substrate-binding site is contributed by 222–226 (FEQME). 332 to 336 (EPALG) contacts substrate.

It belongs to the class-II aminoacyl-tRNA synthetase family. Homodimer.

The protein localises to the cytoplasm. The enzyme catalyses tRNA(Gly) + glycine + ATP = glycyl-tRNA(Gly) + AMP + diphosphate. Catalyzes the attachment of glycine to tRNA(Gly). The sequence is that of Glycine--tRNA ligase from Leptospira interrogans serogroup Icterohaemorrhagiae serovar Lai (strain 56601).